The following is an 82-amino-acid chain: Small ribosomal subunit protein uS17 (82 aa).

This sequence belongs to the universal ribosomal protein uS17 family. Part of the 30S ribosomal subunit.

In terms of biological role, one of the primary rRNA binding proteins, it binds specifically to the 5'-end of 16S ribosomal RNA. The sequence is that of Small ribosomal subunit protein uS17 from Rickettsia typhi (strain ATCC VR-144 / Wilmington).